Here is a 62-residue protein sequence, read N- to C-terminus: Conotoxin Tx5.1 (62 aa).

Residues 1–22 form the signal peptide; that stretch reads MCCLPVFVILLLLIASAPSVDA. The propeptide occupies 23 to 49; the sequence is QPKTKDDVPLAPLHDNAKSALQHLNQR. The residue at position 60 (Gln60) is a Glutamine amide.

It belongs to the conotoxin T superfamily. Contains 2 disulfide bonds that can be either 'C1-C3, C2-C4' or 'C1-C4, C2-C3', since these disulfide connectivities have been observed for conotoxins with cysteine framework V (for examples, see AC P0DQQ7 and AC P81755). As to expression, expressed by the venom duct.

The protein localises to the secreted. The sequence is that of Conotoxin Tx5.1 from Conus textile (Cloth-of-gold cone).